A 717-amino-acid polypeptide reads, in one-letter code: MFDITNLIELYESNDYVSGDYKHSQLQKAFLKLPITEVVMLVKSGFYPSKLSKKFYKPIAKFCVDKIYLFKPEYVSLKDLFTVIYTFDDLSKYKEIIRYYYYELSVSNSYQVYKKCKNILGYKDEYDNDIIEELSENDLVEKMVNFPGFRKIVYKKKILSIRILKEMYYKHKVLPINKGITPIREEDICFFIDALYDAHDDDDVLYLLLEINEQILDSDEVKETIIRKICKGENIDVLRYYVSHYLIDHAKLGVYYNIFFSERDIISEYGLTDESLKVICKYIDRYSSSIPSIIKLLLDNSNYTLLASVIDYIPEERLNENLYMQIVRHSNDNKPKIKSFKAEFLSECLMVMCYLRGYEDIVDFLIALDVETIVRNRINPFNDYTFTTDWFNKNTELVRLYISFYFIDPVMMRKLLFEYPLCETSTTVAIEELKKYRSSINNNYNIDYHEEFKIVDLPRSFNIPISEVVSTKEYNSIISFISDKSYKFKITSQLLKYNILQTIKVENLCYSHINNLHSFYFNITKPSGIIDNISRLIYQIGDLGRLLRHGFLSFTDNYFGKWIPSLNYSKILDHYQYNGPDYVLSWQIGKLDLKAFVKYKDFPKFFLTKYNIDFLLEKEVLLYYCIYSYLLLYILVGSVTYVEQENIYYFITNIINSFIQGLGIRNSIDSLSEEVVKELIIIQKLPENKRKLSSIRPVSLLNLCKRVCAFISRDGKK.

It belongs to the poxviridae E2 protein family.

The polypeptide is Protein E2 homolog (Fowlpox virus (strain NVSL) (FPV)).